The chain runs to 572 residues: Urease subunit alpha (572 aa).

The region spanning Gly-134–Phe-572 is the Urease domain. Residues His-139, His-141, and Lys-222 each contribute to the Ni(2+) site. An N6-carboxylysine modification is found at Lys-222. A substrate-binding site is contributed by His-224. Positions 251 and 277 each coordinate Ni(2+). Residue His-325 is the Proton donor of the active site. Residue Asp-365 participates in Ni(2+) binding.

The protein belongs to the metallo-dependent hydrolases superfamily. Urease alpha subunit family. Heterotrimer of UreA (gamma), UreB (beta) and UreC (alpha) subunits. Three heterotrimers associate to form the active enzyme. The cofactor is Ni cation. Post-translationally, carboxylation allows a single lysine to coordinate two nickel ions.

The protein localises to the cytoplasm. The enzyme catalyses urea + 2 H2O + H(+) = hydrogencarbonate + 2 NH4(+). It participates in nitrogen metabolism; urea degradation; CO(2) and NH(3) from urea (urease route): step 1/1. The polypeptide is Urease subunit alpha (Polaromonas sp. (strain JS666 / ATCC BAA-500)).